A 275-amino-acid polypeptide reads, in one-letter code: NH(3)-dependent NAD(+) synthetase (275 aa).

G46–S53 is a binding site for ATP. D52 contacts Mg(2+). Deamido-NAD(+) is bound at residue R141. T161 lines the ATP pocket. Position 166 (E166) interacts with Mg(2+). 2 residues coordinate deamido-NAD(+): K174 and D181. ATP-binding residues include K190 and T212. H261–K262 lines the deamido-NAD(+) pocket.

Belongs to the NAD synthetase family. In terms of assembly, homodimer.

It catalyses the reaction deamido-NAD(+) + NH4(+) + ATP = AMP + diphosphate + NAD(+) + H(+). It participates in cofactor biosynthesis; NAD(+) biosynthesis; NAD(+) from deamido-NAD(+) (ammonia route): step 1/1. In terms of biological role, catalyzes the ATP-dependent amidation of deamido-NAD to form NAD. Uses ammonia as a nitrogen source. The polypeptide is NH(3)-dependent NAD(+) synthetase (Limosilactobacillus reuteri (strain DSM 20016) (Lactobacillus reuteri)).